A 1495-amino-acid polypeptide reads, in one-letter code: DNA-directed RNA polymerase subunit 1 (1495 aa).

This sequence belongs to the RNA polymerase beta' chain family.

It localises to the virion. It catalyses the reaction RNA(n) + a ribonucleoside 5'-triphosphate = RNA(n+1) + diphosphate. In terms of biological role, DNA-dependent RNA polymerase catalyzes the transcription of DNA into RNA using the four ribonucleoside triphosphates as substrates. The protein is DNA-directed RNA polymerase subunit 1 (RPO1) of Acanthamoeba polyphaga (Amoeba).